The chain runs to 344 residues: Phenylalanine--tRNA ligase alpha subunit (344 aa).

E256 provides a ligand contact to Mg(2+).

The protein belongs to the class-II aminoacyl-tRNA synthetase family. Phe-tRNA synthetase alpha subunit type 1 subfamily. In terms of assembly, tetramer of two alpha and two beta subunits. The cofactor is Mg(2+).

The protein resides in the cytoplasm. It carries out the reaction tRNA(Phe) + L-phenylalanine + ATP = L-phenylalanyl-tRNA(Phe) + AMP + diphosphate + H(+). This chain is Phenylalanine--tRNA ligase alpha subunit, found in Bacillus mycoides (strain KBAB4) (Bacillus weihenstephanensis).